A 558-amino-acid chain; its full sequence is CTP synthase (558 aa).

The interval 1–267 (MAKFVFVTGG…CLEMLDVLNL (267 aa)) is amidoligase domain. S13 lines the CTP pocket. Residue S13 coordinates UTP. Residues 14-19 (SIGKGI) and D71 contribute to the ATP site. Positions 71 and 141 each coordinate Mg(2+). CTP contacts are provided by residues 148 to 150 (DIE), 188 to 193 (KTKPTQ), and K224. UTP-binding positions include 188–193 (KTKPTQ) and K224. The 243-residue stretch at 292 to 534 (KVALVGKYVQ…IEAAQLRLPA (243 aa)) folds into the Glutamine amidotransferase type-1 domain. G354 serves as a coordination point for L-glutamine. C381 (nucleophile; for glutamine hydrolysis) is an active-site residue. Residues 382-385 (LGMQ), E405, and R462 each bind L-glutamine. Active-site residues include H507 and E509. A disordered region spans residues 536-558 (PDEALRRQSQTNISAQEKPSRIG). Residues 542-552 (RQSQTNISAQE) are compositionally biased toward polar residues.

Belongs to the CTP synthase family. As to quaternary structure, homotetramer.

The enzyme catalyses UTP + L-glutamine + ATP + H2O = CTP + L-glutamate + ADP + phosphate + 2 H(+). It carries out the reaction L-glutamine + H2O = L-glutamate + NH4(+). The catalysed reaction is UTP + NH4(+) + ATP = CTP + ADP + phosphate + 2 H(+). It functions in the pathway pyrimidine metabolism; CTP biosynthesis via de novo pathway; CTP from UDP: step 2/2. With respect to regulation, allosterically activated by GTP, when glutamine is the substrate; GTP has no effect on the reaction when ammonia is the substrate. The allosteric effector GTP functions by stabilizing the protein conformation that binds the tetrahedral intermediate(s) formed during glutamine hydrolysis. Inhibited by the product CTP, via allosteric rather than competitive inhibition. Its function is as follows. Catalyzes the ATP-dependent amination of UTP to CTP with either L-glutamine or ammonia as the source of nitrogen. Regulates intracellular CTP levels through interactions with the four ribonucleotide triphosphates. The protein is CTP synthase of Prochlorococcus marinus (strain MIT 9303).